The chain runs to 267 residues: tRNA pseudouridine synthase A (267 aa).

Aspartate 51 (nucleophile) is an active-site residue. Tyrosine 109 serves as a coordination point for substrate.

This sequence belongs to the tRNA pseudouridine synthase TruA family.

It carries out the reaction uridine(38/39/40) in tRNA = pseudouridine(38/39/40) in tRNA. In terms of biological role, formation of pseudouridine at positions 38, 39 and 40 in the anticodon stem and loop of transfer RNAs. This is tRNA pseudouridine synthase A from Methanothrix thermoacetophila (strain DSM 6194 / JCM 14653 / NBRC 101360 / PT) (Methanosaeta thermophila).